An 837-amino-acid polypeptide reads, in one-letter code: Dapper homolog 2 (837 aa).

Positions glutamate 65–valine 113 form a coiled coil. Disordered stretches follow at residues alanine 189–glutamine 265, histidine 424–serine 497, glycine 512–glycine 564, glutamine 600–arginine 649, and glutamate 738–glycine 782. Polar residues-rich tracts occupy residues valine 246–glutamine 265 and leucine 432–alanine 445. Composition is skewed to basic and acidic residues over residues alanine 456–lysine 466, glutamate 486–serine 496, and leucine 548–leucine 560. Polar residues predominate over residues aspartate 741 to alanine 759. Residues leucine 768–glycine 782 show a composition bias toward acidic residues. The PDZ-binding signature appears at methionine 834–valine 837.

The protein belongs to the dapper family. As to quaternary structure, interacts with dvl2.

The protein localises to the cytoplasm. The protein resides in the late endosome. It localises to the nucleus. Its subcellular location is the cell membrane. Functionally, involved in regulation of intracellular signaling pathways during development. Specifically thought to play a role in canonical and/or non-canonical Wnt signaling pathways through interaction with DSH (Dishevelled) family proteins. Positive regulator of the Wnt signaling pathway which acts downstream of wnt1 indicative for non-canonical Wnt signaling. Also negatively regulates the Nodal signaling pathway, possibly by promoting the lysosomal degradation of Nodal receptors. Required for convergent extension movements in gastrulation. In Danio rerio (Zebrafish), this protein is Dapper homolog 2 (dact2).